The sequence spans 333 residues: Glycerol-3-phosphate dehydrogenase [NAD(P)+] (333 aa).

Positions 13, 33, and 108 each coordinate NADPH. Sn-glycerol 3-phosphate contacts are provided by K108 and G138. S142 is an NADPH binding site. Sn-glycerol 3-phosphate contacts are provided by K193, D246, S256, R257, and N258. K193 functions as the Proton acceptor in the catalytic mechanism. NADPH is bound at residue R257. V281 and E283 together coordinate NADPH.

The protein belongs to the NAD-dependent glycerol-3-phosphate dehydrogenase family.

It is found in the cytoplasm. The enzyme catalyses sn-glycerol 3-phosphate + NAD(+) = dihydroxyacetone phosphate + NADH + H(+). It carries out the reaction sn-glycerol 3-phosphate + NADP(+) = dihydroxyacetone phosphate + NADPH + H(+). The protein operates within membrane lipid metabolism; glycerophospholipid metabolism. Its function is as follows. Catalyzes the reduction of the glycolytic intermediate dihydroxyacetone phosphate (DHAP) to sn-glycerol 3-phosphate (G3P), the key precursor for phospholipid synthesis. This chain is Glycerol-3-phosphate dehydrogenase [NAD(P)+], found in Bifidobacterium longum subsp. infantis (strain ATCC 15697 / DSM 20088 / JCM 1222 / NCTC 11817 / S12).